We begin with the raw amino-acid sequence, 89 residues long: U-scoloptoxin(12)-Er1a (89 aa).

An N-terminal signal peptide occupies residues 1 to 22; it reads MKGLFLVVFLMWFVSQMNTEET.

The protein belongs to the scoloptoxin-12 family. Contains 3 disulfide bonds. As to expression, expressed by the venom gland.

Its subcellular location is the secreted. This chain is U-scoloptoxin(12)-Er1a, found in Ethmostigmus rubripes (Giant centipede).